The sequence spans 251 residues: Segregation and condensation protein A (251 aa).

The protein belongs to the ScpA family. In terms of assembly, component of a cohesin-like complex composed of ScpA, ScpB and the Smc homodimer, in which ScpA and ScpB bind to the head domain of Smc. The presence of the three proteins is required for the association of the complex with DNA.

It localises to the cytoplasm. Participates in chromosomal partition during cell division. May act via the formation of a condensin-like complex containing Smc and ScpB that pull DNA away from mid-cell into both cell halves. The protein is Segregation and condensation protein A of Clostridium botulinum (strain Eklund 17B / Type B).